A 547-amino-acid polypeptide reads, in one-letter code: Chaperonin GroEL 1 (547 aa).

ATP contacts are provided by residues 30-33 (TLGP), lysine 51, 87-91 (DGTTT), glycine 415, and aspartate 494. The segment at 524–547 (PKGKAKGGGAGAGMPDYGGDDMDY) is disordered.

This sequence belongs to the chaperonin (HSP60) family. Forms a cylinder of 14 subunits composed of two heptameric rings stacked back-to-back. Interacts with the co-chaperonin GroES.

The protein localises to the cytoplasm. It catalyses the reaction ATP + H2O + a folded polypeptide = ADP + phosphate + an unfolded polypeptide.. Together with its co-chaperonin GroES, plays an essential role in assisting protein folding. The GroEL-GroES system forms a nano-cage that allows encapsulation of the non-native substrate proteins and provides a physical environment optimized to promote and accelerate protein folding. In Myxococcus xanthus (strain DK1622), this protein is Chaperonin GroEL 1.